A 188-amino-acid chain; its full sequence is dCTP deaminase (188 aa).

Residues 111 to 116 (KSTYAR), 135 to 137 (TLE), Gln-156, Tyr-170, Lys-179, and Gln-180 each bind dCTP. Glu-137 (proton donor/acceptor) is an active-site residue.

It belongs to the dCTP deaminase family. In terms of assembly, homotrimer.

It catalyses the reaction dCTP + H2O + H(+) = dUTP + NH4(+). It participates in pyrimidine metabolism; dUMP biosynthesis; dUMP from dCTP (dUTP route): step 1/2. Its function is as follows. Catalyzes the deamination of dCTP to dUTP. This is dCTP deaminase from Rickettsia felis (strain ATCC VR-1525 / URRWXCal2) (Rickettsia azadi).